We begin with the raw amino-acid sequence, 370 residues long: Probable trehalose-phosphate phosphatase J (370 aa).

The protein belongs to the trehalose phosphatase family. A divalent metal cation serves as cofactor.

It catalyses the reaction alpha,alpha-trehalose 6-phosphate + H2O = alpha,alpha-trehalose + phosphate. It participates in glycan biosynthesis; trehalose biosynthesis. Functionally, removes the phosphate from trehalose 6-phosphate to produce free trehalose. Trehalose accumulation in plant may improve abiotic stress tolerance. In Arabidopsis thaliana (Mouse-ear cress), this protein is Probable trehalose-phosphate phosphatase J (TPPJ).